A 292-amino-acid polypeptide reads, in one-letter code: Zinc finger protein OZF (292 aa).

C2H2-type zinc fingers lie at residues 16 to 38 (FACK…EHFH), 44 to 66 (FECN…QNTH), 72 to 94 (LECN…QKIH), 100 to 122 (FECK…QRTH), 128 to 150 (FICK…EKIH), 156 to 178 (FKCN…QNIH), 184 to 206 (YECN…VRIH), 212 to 234 (YECN…VRSH), 240 to 262 (YGCN…LRIH), and 268 to 290 (YQCS…QKIH). Residues Lys28, Lys51, and Lys56 each participate in a glycyl lysine isopeptide (Lys-Gly) (interchain with G-Cter in SUMO2) cross-link. Residues Lys157 and Lys169 each participate in a glycyl lysine isopeptide (Lys-Gly) (interchain with G-Cter in SUMO) cross-link. Lys173 participates in a covalent cross-link: Glycyl lysine isopeptide (Lys-Gly) (interchain with G-Cter in SUMO2). The interaction with TERF2IP stretch occupies residues 212-292 (YECNVCGKAF…HIRHQKIHTH (81 aa)).

It belongs to the krueppel C2H2-type zinc-finger protein family. Binds DNA. Interacts with SUMO conjugating enzyme UBC9/UBE2I. Interacts with the telomeric protein TERF2IP.

It localises to the nucleus. In Bos taurus (Bovine), this protein is Zinc finger protein OZF (ZNF146).